We begin with the raw amino-acid sequence, 440 residues long: Protein CyaD (440 aa).

The Cytoplasmic segment spans residues 1 to 55; that stretch reads MRRALRELAARHGRVLAASWRQRHRRPAGWFDPVETEFLPSALSLQERPISPTAR. The helical transmembrane segment at 56–75 threads the bilayer; sequence WLARILMALAAGALVWSVVG. Residues 76–440 are Periplasmic-facing; it reads KTEIVVHAAG…RHAGESLGER (365 aa).

The protein belongs to the membrane fusion protein (MFP) (TC 8.A.1) family.

It localises to the cell inner membrane. Functionally, cyaD is necessary for transport of calmodulin-sensitive adenylate cyclase-hemolysin (cyclolysin). This chain is Protein CyaD (cyaD), found in Bordetella pertussis (strain ATCC 9797 / DSM 5571 / CCUG 30873 / LMG 14455 / NCTC 10739 / 18323).